The sequence spans 457 residues: Acetylcholine receptor subunit alpha (457 aa).

Positions 1–20 (MEPRPLLLLLGLCSAGLVLG) are cleaved as a signal peptide. At 21 to 230 (SEHETRLVAK…ITYHFVMQRL (210 aa)) the chain is on the extracellular side. 2 disulfides stabilise this stretch: Cys-148-Cys-162 and Cys-212-Cys-213. A glycan (N-linked (GlcNAc...) asparagine) is linked at Asn-161. Helical transmembrane passes span 231-255 (PLYF…VFYL), 263-281 (MTLS…LVIV), and 297-316 (YMLF…VIVI). The Cytoplasmic portion of the chain corresponds to 317-428 (NTHHRSPSTH…WKYVAMVMDH (112 aa)). A helical transmembrane segment spans residues 429-447 (ILLAVFMLVCIIGTLAVFA).

It belongs to the ligand-gated ion channel (TC 1.A.9) family. Acetylcholine receptor (TC 1.A.9.1) subfamily. Alpha-1/CHRNA1 sub-subfamily. One of the alpha chains that assemble within the acetylcholine receptor, a pentamer of two alpha chains, a beta, a delta, and a gamma (in immature muscle) or epsilon (in mature muscle) chains. The muscle heteropentamer composed of alpha-1, beta-1, delta, epsilon subunits interacts with the alpha-conotoxin ImII.

The protein localises to the postsynaptic cell membrane. It localises to the cell membrane. It carries out the reaction K(+)(in) = K(+)(out). The catalysed reaction is Na(+)(in) = Na(+)(out). Its function is as follows. Upon acetylcholine binding, the AChR responds by an extensive change in conformation that affects all subunits and leads to opening of an ion-conducting channel across the plasma membrane. This chain is Acetylcholine receptor subunit alpha (CHRNA1), found in Bos taurus (Bovine).